The following is a 483-amino-acid chain: UDP-N-acetylmuramate--L-alanine ligase (483 aa).

An ATP-binding site is contributed by 112 to 118 (GTHGKTT).

Belongs to the MurCDEF family.

It is found in the cytoplasm. It carries out the reaction UDP-N-acetyl-alpha-D-muramate + L-alanine + ATP = UDP-N-acetyl-alpha-D-muramoyl-L-alanine + ADP + phosphate + H(+). It participates in cell wall biogenesis; peptidoglycan biosynthesis. In terms of biological role, cell wall formation. This Ralstonia nicotianae (strain ATCC BAA-1114 / GMI1000) (Ralstonia solanacearum) protein is UDP-N-acetylmuramate--L-alanine ligase.